We begin with the raw amino-acid sequence, 396 residues long: Phosphoglycerate kinase (396 aa).

Substrate contacts are provided by residues 21–23 (DFN), arginine 36, 59–62 (HLGR), arginine 118, and arginine 151. ATP-binding positions include lysine 201, glycine 292, glutamate 323, and 349-352 (GGDS).

It belongs to the phosphoglycerate kinase family. As to quaternary structure, monomer.

It is found in the cytoplasm. It carries out the reaction (2R)-3-phosphoglycerate + ATP = (2R)-3-phospho-glyceroyl phosphate + ADP. It participates in carbohydrate degradation; glycolysis; pyruvate from D-glyceraldehyde 3-phosphate: step 2/5. The chain is Phosphoglycerate kinase from Leptospira interrogans serogroup Icterohaemorrhagiae serovar copenhageni (strain Fiocruz L1-130).